Reading from the N-terminus, the 387-residue chain is Xylose isomerase (387 aa).

Residues His-53 and Asp-56 contribute to the active site. Residues Glu-180, Glu-216, His-219, Asp-244, Asp-254, Asp-256, and Asp-286 each coordinate Mg(2+).

It belongs to the xylose isomerase family. As to quaternary structure, homotetramer. Requires Mg(2+) as cofactor.

The protein localises to the cytoplasm. It catalyses the reaction alpha-D-xylose = alpha-D-xylulofuranose. This is Xylose isomerase (xylA) from Thermus thermophilus (strain ATCC 27634 / DSM 579 / HB8).